Reading from the N-terminus, the 198-residue chain is Nucleoid occlusion factor SlmA (198 aa).

The HTH tetR-type domain occupies 11 to 71; it reads PNRKHQILES…GLIDFIEESI (61 aa). The segment at residues 34-53 is a DNA-binding region (H-T-H motif); sequence TTAKLAAEVGFSEAALYRHF.

It belongs to the nucleoid occlusion factor SlmA family. As to quaternary structure, homodimer. Interacts with FtsZ.

Its subcellular location is the cytoplasm. It localises to the nucleoid. Its function is as follows. Required for nucleoid occlusion (NO) phenomenon, which prevents Z-ring formation and cell division over the nucleoid. Acts as a DNA-associated cell division inhibitor that binds simultaneously chromosomal DNA and FtsZ, and disrupts the assembly of FtsZ polymers. SlmA-DNA-binding sequences (SBS) are dispersed on non-Ter regions of the chromosome, preventing FtsZ polymerization at these regions. This is Nucleoid occlusion factor SlmA from Colwellia psychrerythraea (strain 34H / ATCC BAA-681) (Vibrio psychroerythus).